The following is a 238-amino-acid chain: Sugar fermentation stimulation protein homolog (238 aa).

This sequence belongs to the SfsA family.

The polypeptide is Sugar fermentation stimulation protein homolog (Pseudoalteromonas translucida (strain TAC 125)).